A 73-amino-acid chain; its full sequence is Disintegrin lachesin (73 aa).

Positions 1-73 (EAGEECDCGA…ADCPRNGYYG (73 aa)) constitute a Disintegrin domain. 6 disulfide bridges follow: Cys-6/Cys-21, Cys-8/Cys-16, Cys-15/Cys-38, Cys-29/Cys-35, Cys-34/Cys-59, and Cys-47/Cys-66. The Cell attachment site signature appears at 51-53 (RGD). The segment at 51 to 73 (RGDNPDDRCTGQSADCPRNGYYG) is disordered.

This sequence belongs to the venom metalloproteinase (M12B) family. P-II subfamily. P-IIa sub-subfamily. In terms of assembly, monomer (disintegrin). Expressed by the venom gland.

It is found in the secreted. Inhibits fibrinogen interaction with platelets. Acts by binding to alpha-IIb/beta-3 (ITGA2B/ITGB3) on the platelet surface and inhibits aggregation induced by ADP, thrombin, platelet-activating factor and collagen. This chain is Disintegrin lachesin, found in Lachesis muta muta (Bushmaster).